Here is a 517-residue protein sequence, read N- to C-terminus: GMP synthase [glutamine-hydrolyzing] (517 aa).

The Glutamine amidotransferase type-1 domain maps to 9 to 199 (RILILDFGSQ…VLGVCGCERL (191 aa)). The active-site Nucleophile is Cys86. Catalysis depends on residues His173 and Glu175. Residues 200 to 392 (WTSESIIEDA…LGLPYNMLYR (193 aa)) form the GMPS ATP-PPase domain. Residue 227-233 (SGGVDSS) participates in ATP binding.

As to quaternary structure, homodimer.

It carries out the reaction XMP + L-glutamine + ATP + H2O = GMP + L-glutamate + AMP + diphosphate + 2 H(+). Its pathway is purine metabolism; GMP biosynthesis; GMP from XMP (L-Gln route): step 1/1. Its function is as follows. Catalyzes the synthesis of GMP from XMP. The chain is GMP synthase [glutamine-hydrolyzing] from Vibrio campbellii (strain ATCC BAA-1116).